We begin with the raw amino-acid sequence, 364 residues long: DNA replication and repair protein RecF (364 aa).

An ATP-binding site is contributed by 30-37 (GNNGMGKT).

Belongs to the RecF family.

It localises to the cytoplasm. Its function is as follows. The RecF protein is involved in DNA metabolism; it is required for DNA replication and normal SOS inducibility. RecF binds preferentially to single-stranded, linear DNA. It also seems to bind ATP. The protein is DNA replication and repair protein RecF of Porphyromonas gingivalis (strain ATCC BAA-308 / W83).